The sequence spans 367 residues: 2-aminoethylphosphonate--pyruvate transaminase (367 aa).

K194 carries the N6-(pyridoxal phosphate)lysine modification.

It belongs to the class-V pyridoxal-phosphate-dependent aminotransferase family. PhnW subfamily. As to quaternary structure, homodimer. Requires pyridoxal 5'-phosphate as cofactor.

It catalyses the reaction (2-aminoethyl)phosphonate + pyruvate = phosphonoacetaldehyde + L-alanine. In terms of biological role, involved in phosphonate degradation. The protein is 2-aminoethylphosphonate--pyruvate transaminase of Salmonella heidelberg (strain SL476).